A 95-amino-acid polypeptide reads, in one-letter code: Large ribosomal subunit protein bL28 (95 aa).

It belongs to the bacterial ribosomal protein bL28 family.

This chain is Large ribosomal subunit protein bL28, found in Orientia tsutsugamushi (strain Ikeda) (Rickettsia tsutsugamushi).